The primary structure comprises 262 residues: Ribosome-recycling factor, mitochondrial (262 aa).

Residues 1-55 (MASGIRCFRLLHPAFRSYHAALTRPVSEVSMKTVSGRQHGHRQYSAYPAVPVRHF) constitute a mitochondrion transit peptide.

The protein belongs to the RRF family.

It localises to the mitochondrion. Responsible for the disassembly of ribosomes from messenger RNA at the termination of mitochondrial protein biosynthesis. Acts in collaboration with GFM2. Promotes mitochondrial ribosome recycling by dissolution of intersubunit contacts. The polypeptide is Ribosome-recycling factor, mitochondrial (Mrrf) (Mus musculus (Mouse)).